The following is a 287-amino-acid chain: 4-hydroxybenzoate octaprenyltransferase (287 aa).

The next 6 helical transmembrane spans lie at W41–M61, W89–L109, F133–F153, N158–Y178, L218–W238, and N267–S287.

This sequence belongs to the UbiA prenyltransferase family. Mg(2+) is required as a cofactor.

It localises to the cell inner membrane. The catalysed reaction is all-trans-octaprenyl diphosphate + 4-hydroxybenzoate = 4-hydroxy-3-(all-trans-octaprenyl)benzoate + diphosphate. The protein operates within cofactor biosynthesis; ubiquinone biosynthesis. In terms of biological role, catalyzes the prenylation of para-hydroxybenzoate (PHB) with an all-trans polyprenyl group. Mediates the second step in the final reaction sequence of ubiquinone-8 (UQ-8) biosynthesis, which is the condensation of the polyisoprenoid side chain with PHB, generating the first membrane-bound Q intermediate 3-octaprenyl-4-hydroxybenzoate. The protein is 4-hydroxybenzoate octaprenyltransferase of Burkholderia multivorans (strain ATCC 17616 / 249).